The sequence spans 584 residues: Arginine--tRNA ligase (584 aa).

Positions 126-136 match the 'HIGH' region motif; sequence PNIAKEMHVGH.

Belongs to the class-I aminoacyl-tRNA synthetase family. Monomer.

The protein resides in the cytoplasm. It carries out the reaction tRNA(Arg) + L-arginine + ATP = L-arginyl-tRNA(Arg) + AMP + diphosphate. This Nostoc punctiforme (strain ATCC 29133 / PCC 73102) protein is Arginine--tRNA ligase.